A 59-amino-acid polypeptide reads, in one-letter code: U-myrmeciitoxin(01)-Mg5a (59 aa).

Positions Met-1–Ala-21 are cleaved as a signal peptide. Residues Ser-22–Gly-38 constitute a propeptide that is removed on maturation.

In terms of tissue distribution, expressed by the venom gland.

It is found in the secreted. In terms of biological role, may have antimicrobial properties, like most ant linear peptides. This Myrmecia gulosa (Red bulldog ant) protein is U-myrmeciitoxin(01)-Mg5a.